Consider the following 333-residue polypeptide: Glycerol-3-phosphate dehydrogenase [NAD(P)+] (333 aa).

NADPH contacts are provided by serine 10, tryptophan 11, histidine 31, arginine 32, and lysine 105. Positions 105, 136, and 138 each coordinate sn-glycerol 3-phosphate. Alanine 140 serves as a coordination point for NADPH. Lysine 191, aspartate 244, serine 254, arginine 255, and asparagine 256 together coordinate sn-glycerol 3-phosphate. Lysine 191 (proton acceptor) is an active-site residue. Residue arginine 255 coordinates NADPH. Residues valine 279 and glutamate 281 each contribute to the NADPH site.

Belongs to the NAD-dependent glycerol-3-phosphate dehydrogenase family.

It localises to the cytoplasm. It carries out the reaction sn-glycerol 3-phosphate + NAD(+) = dihydroxyacetone phosphate + NADH + H(+). It catalyses the reaction sn-glycerol 3-phosphate + NADP(+) = dihydroxyacetone phosphate + NADPH + H(+). It participates in membrane lipid metabolism; glycerophospholipid metabolism. Functionally, catalyzes the reduction of the glycolytic intermediate dihydroxyacetone phosphate (DHAP) to sn-glycerol 3-phosphate (G3P), the key precursor for phospholipid synthesis. In Chlorobium limicola (strain DSM 245 / NBRC 103803 / 6330), this protein is Glycerol-3-phosphate dehydrogenase [NAD(P)+].